Here is a 363-residue protein sequence, read N- to C-terminus: DNA replication and repair protein RecF (363 aa).

Residue 30-37 participates in ATP binding; it reads GDNAQGKT.

This sequence belongs to the RecF family.

It localises to the cytoplasm. In terms of biological role, the RecF protein is involved in DNA metabolism; it is required for DNA replication and normal SOS inducibility. RecF binds preferentially to single-stranded, linear DNA. It also seems to bind ATP. The sequence is that of DNA replication and repair protein RecF from Lachnospira eligens (strain ATCC 27750 / DSM 3376 / VPI C15-48 / C15-B4) (Eubacterium eligens).